We begin with the raw amino-acid sequence, 88 residues long: Cell division topological specificity factor (88 aa).

This sequence belongs to the MinE family.

Functionally, prevents the cell division inhibition by proteins MinC and MinD at internal division sites while permitting inhibition at polar sites. This ensures cell division at the proper site by restricting the formation of a division septum at the midpoint of the long axis of the cell. The chain is Cell division topological specificity factor from Salmonella agona (strain SL483).